A 435-amino-acid chain; its full sequence is T-box transcription factor T (435 aa).

A DNA-binding region (T-box) is located at residues 51 to 219 (LWLRFKELTN…YNPFAKAFLD (169 aa)). Residues 279 to 308 (YPTLRSHRSSPYPSPYAHRNNSPTYSDNSP) form a disordered region. The span at 297 to 308 (RNNSPTYSDNSP) shows a compositional bias: polar residues.

As to quaternary structure, monomer. In terms of tissue distribution, detected in testis, but not in other, normal tissues. Detected in lung tumors (at protein level).

It localises to the nucleus. Functionally, involved in the transcriptional regulation of genes required for mesoderm formation and differentiation. Binds to a palindromic T site 5'-TTCACACCTAGGTGTGAA-3' DNA sequence and activates gene transcription when bound to such a site. This chain is T-box transcription factor T, found in Homo sapiens (Human).